A 161-amino-acid chain; its full sequence is V-type proton ATPase 16 kDa proteolipid subunit c 2 (161 aa).

At 1-15 (MSYDLETAERAAYAP) the chain is on the lumenal side. Residues 16–36 (FFGYMGAASAQIFTVLGAAYG) form a helical membrane-spanning segment. Residues 37–58 (TAKSAVGICSMGVMRPELIMKS) lie on the Cytoplasmic side of the membrane. Residues 59–79 (VIPVIMAGIIGIYGLVVAMVL) form a helical membrane-spanning segment. Topologically, residues 80 to 98 (KGKVTSASAGYDLNKGFAH) are lumenal. Residues 99–119 (LAAGLTCGLCGLGAGYAIGIV) form a helical membrane-spanning segment. Residues 120–137 (GDAGVRGTAQQPRLFVGM) lie on the Cytoplasmic side of the membrane. Residues 138 to 158 (ILILIFSEVLGLYGMIVALIL) form a helical membrane-spanning segment. Residues 159–161 (GTS) are Lumenal-facing.

The protein belongs to the V-ATPase proteolipid subunit family. As to quaternary structure, V-ATPase is a heteromultimeric enzyme made up of two complexes: the ATP-hydrolytic V1 complex and the proton translocation V0 complex. The V1 complex consists of three catalytic AB heterodimers that form a heterohexamer, three peripheral stalks each consisting of EG heterodimers, one central rotor including subunits D and F, and the regulatory subunits C and H. The proton translocation complex V0 consists of the proton transport subunit a, a ring of proteolipid subunits c9c'', rotary subunit d, subunits e and f, and the accessory subunits vah-19/Ac45 and vah-20/PRR. Expressed in the H-shaped excretory cell, rectum, and a pair of cells posterior to the anus.

It localises to the membrane. In terms of biological role, proton-conducting pore forming subunit of the V0 complex of vacuolar(H+)-ATPase (V-ATPase), a multisubunit enzyme composed of a peripheral complex (V1) that hydrolyzes ATP and a membrane integral complex (V0) that translocates protons. V-ATPase is responsible for acidifying and maintaining the pH of intracellular compartments and in some cell types, is targeted to the plasma membrane, where it is responsible for acidifying the extracellular environment. Involved in necrotic cell death. Required along with other vacuolar ATPase components for the removal of protein aggregates which form in immature oocytes in the distal gonad. This removal occurs as the oocytes mature and move to the proximal gonad, is triggered by the introduction of sperm through mating and occurs before fertilization. The introduction of sperm triggers V-ATPase accumulation in proximal oocytes and induces lysosomal acidification which leads to engulfing of protein aggregates by lysosomes and subsequent clearance of the aggregates. Lysosomal acidification also leads to changes in mitochondrial morphology and function. Mitochondria in distal immature oocytes are fragmented, produce high levels of reactive oxygen species (ROS) and have high membrane potential, indicative of metabolic inactivity. In contrast, mitochondria in proximal mature oocytes are tubular with lower ROS levels and membrane potential, indicative of an active metabolic state required for aggregate mobilization before clearance. This chain is V-type proton ATPase 16 kDa proteolipid subunit c 2, found in Caenorhabditis elegans.